A 100-amino-acid chain; its full sequence is Competence protein ComGE (100 aa).

The helical transmembrane segment at 15–35 (VILLEAVVALAIFASIATLLL) threads the bilayer.

As to quaternary structure, the transformation pili are flexible filaments, consisting mainly of the major pilin ComGC and smaller amounts of the minor pilins, including at least ComGD, ComGF and ComGG, and perhaps ComGE. Interacts with ComGD. Interacts with ComGF. Interacts with ComGG.

It is found in the cell membrane. The protein resides in the cell surface. Required for formation of the type IV-like pilus (T4P) that plays a role in transformation. Transformation pili are dynamically extended and retracted, perhaps thereby promoting DNA uptake and transformation. Involved in transformation. Required for DNA binding. In Streptococcus pneumoniae (strain ATCC BAA-255 / R6), this protein is Competence protein ComGE.